A 394-amino-acid chain; its full sequence is MTQLETRTEPMVVNFGPHHPSMHGVLRLVVTLDGEDVVDCEPVIGYLHRGMEKIAENRTNVMFVPYVSRMDYAAGMFYEAIVVNAPERLANIKVPKRASYIRAIMLELNRIANHLLWLGPFLADVGAQTPFFYIFREREMIYDLWEAATGQRLINNNYFRIGGVACDLPWGWLEKCKDFCDWFGPKIDEYEKLITNNPIFRRRIEGLGVIGKEQAINWSLSGPMLRAAGVPWDLRKVDHYECYDDFEWDIAWEKEGDCYARYRVRIEEMRQSLKILRQACEMIPGGPTENLEAQRTVEGKKGDLSGFDYQYVAKKVAPTFKIPNGELYTRLESGKGEIGVFIQGNNDVTPWRFKIRAADSNNLQILPHILKGAKVADIMAILGSIDVIMGSVDR.

It belongs to the complex I 49 kDa subunit family. NDH-1 can be composed of about 15 different subunits; different subcomplexes with different compositions have been identified which probably have different functions.

It localises to the cellular thylakoid membrane. The catalysed reaction is a plastoquinone + NADH + (n+1) H(+)(in) = a plastoquinol + NAD(+) + n H(+)(out). It catalyses the reaction a plastoquinone + NADPH + (n+1) H(+)(in) = a plastoquinol + NADP(+) + n H(+)(out). NDH-1 shuttles electrons from an unknown electron donor, via FMN and iron-sulfur (Fe-S) centers, to quinones in the respiratory and/or the photosynthetic chain. The immediate electron acceptor for the enzyme in this species is believed to be plastoquinone. Couples the redox reaction to proton translocation, and thus conserves the redox energy in a proton gradient. Cyanobacterial NDH-1 also plays a role in inorganic carbon-concentration. The polypeptide is NAD(P)H-quinone oxidoreductase subunit H (Prochlorococcus marinus (strain NATL2A)).